Here is a 39-residue protein sequence, read N- to C-terminus: Photosystem II reaction center protein L (39 aa).

The chain crosses the membrane as a helical span at residues 18–38 (SLYLGLLSVFVLGILFSSYFF).

Belongs to the PsbL family. PSII is composed of 1 copy each of membrane proteins PsbA, PsbB, PsbC, PsbD, PsbE, PsbF, PsbH, PsbI, PsbJ, PsbK, PsbL, PsbM, PsbT, PsbX, PsbY, Psb30/Ycf12, peripheral proteins PsbO, CyanoQ (PsbQ), PsbU, PsbV and a large number of cofactors. It forms dimeric complexes.

It localises to the cellular thylakoid membrane. Functionally, one of the components of the core complex of photosystem II (PSII). PSII is a light-driven water:plastoquinone oxidoreductase that uses light energy to abstract electrons from H(2)O, generating O(2) and a proton gradient subsequently used for ATP formation. It consists of a core antenna complex that captures photons, and an electron transfer chain that converts photonic excitation into a charge separation. This subunit is found at the monomer-monomer interface and is required for correct PSII assembly and/or dimerization. The protein is Photosystem II reaction center protein L of Prochlorococcus marinus (strain MIT 9301).